The following is a 294-amino-acid chain: Cytidine deaminase (294 aa).

2 consecutive CMP/dCMP-type deaminase domains span residues 48 to 168 (NDDE…FGPK) and 187 to 294 (DNTS…RVTL). 89–91 (NME) lines the substrate pocket. Zn(2+) is bound at residue His102. Glu104 (proton donor) is an active-site residue. Residues Cys129 and Cys132 each coordinate Zn(2+).

Belongs to the cytidine and deoxycytidylate deaminase family. Homodimer. The cofactor is Zn(2+).

The catalysed reaction is cytidine + H2O + H(+) = uridine + NH4(+). The enzyme catalyses 2'-deoxycytidine + H2O + H(+) = 2'-deoxyuridine + NH4(+). This enzyme scavenges exogenous and endogenous cytidine and 2'-deoxycytidine for UMP synthesis. The polypeptide is Cytidine deaminase (Proteus mirabilis (strain HI4320)).